Reading from the N-terminus, the 398-residue chain is Flavin-containing monooxygenase ustF1 (398 aa).

The N-terminal stretch at 1 to 22 (MTVSQVRRVAVIGAGISGVVST) is a signal peptide. 13 to 18 (GAGISG) contacts FAD. N-linked (GlcNAc...) asparagine glycans are attached at residues N53, N57, N119, and N126. An NADP(+)-binding site is contributed by 194-199 (GGGVSS). N-linked (GlcNAc...) asparagine glycosylation is found at N236, N243, and N271.

Belongs to the FMO family.

It functions in the pathway mycotoxin biosynthesis. In terms of biological role, flavin-containing monooxygenase; part of the gene cluster that mediates the biosynthesis of the secondary metabolite ustiloxin B, an antimitotic tetrapeptide. First, ustA is processed by the subtilisin-like endoprotease Kex2 that is outside the ustiloxin B gene cluster, at the C-terminal side of Arg-Lys, after transfer to Golgi apparatus through the endoplasmic reticulum (ER). Cleavage by KEX2 generates 16 peptides YAIG-I to YAIG-XVI. To process the precursor peptide further, at least two peptidases are necessary to cleave the N-terminal and C-terminal sides of the Tyr-Ala-Ile-Gly core peptide which serves as backbone for the synthesis of ustiloxin B, through cyclization and modification of the tyrosine with a non-protein coding amino acid, norvaline. One of the two peptidases must be the serine peptidase ustP; and the other pepdidase is probably ustH. Macrocyclization of the core peptide derived from ustA requires the tyrosinase ustQ, as well as the homologous oxidases ustYa and ustYb, and leads to the production of the first cyclization product N-desmethylustiloxin F. For the formation of N-desmethylustiloxin F, three oxidation steps are required, hydroxylation at the benzylic position, hydroxylation at either the aromatic ring of Tyr or beta-position of Ile, and oxidative cyclization. UstQ may catalyze the oxidation of a phenol moiety, whereas the ustYa and ustYb are most likely responsible for the remaining two-step oxidations. N-desmethylustiloxin F is then methylated by ustM to yield ustiloxin F which in turn substrate of the cytochrome P450 monooxygenase ustC which catalyzes the formation of S-deoxyustiloxin H. The flavoprotein monooxygenases ustF1 and ustF2 then participate in the modification of the side chain of S-deoxyustiloxin H, leading to the synthesis of an oxime intermediate, via ustiloxin H. Finally, carboxylative dehydration performed by the cysteine desulfurase-like protein ustD yields ustiloxin B. The chain is Flavin-containing monooxygenase ustF1 from Aspergillus flavus (strain ATCC 200026 / FGSC A1120 / IAM 13836 / NRRL 3357 / JCM 12722 / SRRC 167).